An 886-amino-acid chain; its full sequence is Microsomal triacylglycerol transfer protein (886 aa).

The first 27 residues, 1-27 (MENKNKKCLRTLLLLALFLGLLEDGKT), serve as a signal peptide directing secretion. The region spanning 30–653 (IAPNSQQIFK…SQASSFKLGI (624 aa)) is the Vitellogenin domain. N-linked (GlcNAc...) asparagine glycosylation is found at N358, N484, N502, and N616.

It localises to the endoplasmic reticulum. The protein localises to the golgi apparatus. It catalyses the reaction a 1,2-diacyl-sn-glycero-3-phosphocholine(in) = a 1,2-diacyl-sn-glycero-3-phosphocholine(out). It carries out the reaction a 1,2-diacyl-sn-glycero-3-phosphoethanolamine(in) = a 1,2-diacyl-sn-glycero-3-phosphoethanolamine(out). Catalyzes the transport of phospholipids such as phosphatidylethanolamine (1,2-diacyl-sn-glycero-3-phosphoethanolamine) and phosphatidylcholine (1,2-diacyl-sn-glycero-3-phosphocholine) between membranes. Required for the assembly and secretion of plasma lipoproteins that contain apolipoprotein B. The sequence is that of Microsomal triacylglycerol transfer protein from Drosophila melanogaster (Fruit fly).